The primary structure comprises 434 residues: UDP-N-acetylglucosamine 1-carboxyvinyltransferase (434 aa).

Phosphoenolpyruvate is bound at residue 22–23; that stretch reads KN. Arginine 97 lines the UDP-N-acetyl-alpha-D-glucosamine pocket. Aspartate 121 serves as the catalytic Proton donor. UDP-N-acetyl-alpha-D-glucosamine contacts are provided by aspartate 319 and methionine 341.

This sequence belongs to the EPSP synthase family. MurA subfamily.

The protein resides in the cytoplasm. It catalyses the reaction phosphoenolpyruvate + UDP-N-acetyl-alpha-D-glucosamine = UDP-N-acetyl-3-O-(1-carboxyvinyl)-alpha-D-glucosamine + phosphate. Its pathway is cell wall biogenesis; peptidoglycan biosynthesis. Its function is as follows. Cell wall formation. Adds enolpyruvyl to UDP-N-acetylglucosamine. This chain is UDP-N-acetylglucosamine 1-carboxyvinyltransferase, found in Bacteroides thetaiotaomicron (strain ATCC 29148 / DSM 2079 / JCM 5827 / CCUG 10774 / NCTC 10582 / VPI-5482 / E50).